Consider the following 125-residue polypeptide: Holo-[acyl-carrier-protein] synthase (125 aa).

The Mg(2+) site is built by Asp-8 and Glu-56.

It belongs to the P-Pant transferase superfamily. AcpS family. It depends on Mg(2+) as a cofactor.

The protein localises to the cytoplasm. It catalyses the reaction apo-[ACP] + CoA = holo-[ACP] + adenosine 3',5'-bisphosphate + H(+). Functionally, transfers the 4'-phosphopantetheine moiety from coenzyme A to a Ser of acyl-carrier-protein. The polypeptide is Holo-[acyl-carrier-protein] synthase (Borrelia hermsii (strain HS1 / DAH)).